Consider the following 168-residue polypeptide: Sperm acrosome-associated protein 9 (168 aa).

Microtubule inner protein component of sperm flagellar doublet microtubules. Interacts with CABP1 and CALR. Interacts with INCA1. Interacts with microtubules. Testis-specific. Expressed in round spermatids.

The protein resides in the cytoplasm. The protein localises to the cytoplasmic vesicle. Its subcellular location is the secretory vesicle. It localises to the acrosome. It is found in the cytoskeleton. The protein resides in the cilium basal body. The protein localises to the flagellum axoneme. Its subcellular location is the cilium axoneme. It localises to the nucleus. Microtubule inner protein (MIP) part of the dynein-decorated doublet microtubules (DMTs) of multiciliated respiratory cells and the distal singlet microtubules of monoflagellated spermatozoa. Forms an extensive interaction network cross-linking the lumen of axonemal doublet microtubules. This Rattus norvegicus (Rat) protein is Sperm acrosome-associated protein 9 (Spaca9).